We begin with the raw amino-acid sequence, 138 residues long: DNA-directed RNA polymerase subunit omega (138 aa).

A disordered region spans residues 117–138 (NLLGRDNFFSTPENRNTSNTDS). Polar residues predominate over residues 124–138 (FFSTPENRNTSNTDS).

Belongs to the RNA polymerase subunit omega family. The RNAP catalytic core consists of 2 alpha, 1 beta, 1 beta' and 1 omega subunit. When a sigma factor is associated with the core the holoenzyme is formed, which can initiate transcription.

The catalysed reaction is RNA(n) + a ribonucleoside 5'-triphosphate = RNA(n+1) + diphosphate. Functionally, promotes RNA polymerase assembly. Latches the N- and C-terminal regions of the beta' subunit thereby facilitating its interaction with the beta and alpha subunits. This is DNA-directed RNA polymerase subunit omega from Ehrlichia canis (strain Jake).